The following is a 346-amino-acid chain: Sensor protein kinase GraS (346 aa).

2 consecutive transmembrane segments (helical) span residues 18-38 (IFWI…DYDF) and 43-63 (LFYI…LTFF). The Histidine kinase domain occupies 126-332 (EFVHDIKTPV…TVKLIFPLQN (207 aa)).

In terms of assembly, interacts with GraX.

Its subcellular location is the cell membrane. The catalysed reaction is ATP + protein L-histidine = ADP + protein N-phospho-L-histidine.. Member of the two-component regulatory system GraR/GraS involved in resistance against cationic antimicrobial peptides (CAMPs). Functions as a sensor protein kinase which phosphorylates GraR through the auxiliary protein GraX. In turn, GraR up-regulates many genes such as adhesins, exoproteins, transporters, toxins, and proteins involved in cell wall synthesis. Down-regulates the expression of many genes involved in RNA and amino acid synthesis or glycolysis. The chain is Sensor protein kinase GraS (graS) from Staphylococcus aureus (strain MRSA252).